Here is a 681-residue protein sequence, read N- to C-terminus: DNA-directed RNA polymerase subunit beta' (681 aa).

Cys-69, Cys-71, Cys-87, and Cys-90 together coordinate Zn(2+). The Mg(2+) site is built by Asp-490, Asp-492, and Asp-494.

It belongs to the RNA polymerase beta' chain family. RpoC1 subfamily. In terms of assembly, in plastids the minimal PEP RNA polymerase catalytic core is composed of four subunits: alpha, beta, beta', and beta''. When a (nuclear-encoded) sigma factor is associated with the core the holoenzyme is formed, which can initiate transcription. Mg(2+) is required as a cofactor. It depends on Zn(2+) as a cofactor.

It is found in the plastid. It localises to the chloroplast. The catalysed reaction is RNA(n) + a ribonucleoside 5'-triphosphate = RNA(n+1) + diphosphate. DNA-dependent RNA polymerase catalyzes the transcription of DNA into RNA using the four ribonucleoside triphosphates as substrates. This is DNA-directed RNA polymerase subunit beta' from Liriodendron tulipifera (Tuliptree).